The following is a 572-amino-acid chain: Far upstream element-binding protein 3 (572 aa).

A2 is modified (N-acetylalanine). Glycyl lysine isopeptide (Lys-Gly) (interchain with G-Cter in SUMO2) cross-links involve residues K15 and K57. T76 bears the Phosphothreonine mark. 4 consecutive KH domains span residues 77–141 (VITE…KRLL), 162–228 (STIQ…REMV), 253–317 (GGSI…AHII), and 354–421 (VQEI…RQLI). S296 is modified (phosphoserine). The segment at 426–521 (GGTNLGAPGA…SQPNYSKAWE (96 aa)) is disordered. Low complexity predominate over residues 496 to 514 (QQPTQQVPSQQSQPQSSQP). Phosphoserine occurs at positions 539 and 569.

In terms of tissue distribution, detected in a number of cell lines.

It localises to the nucleus. In terms of biological role, may interact with single-stranded DNA from the far-upstream element (FUSE). May activate gene expression. In Homo sapiens (Human), this protein is Far upstream element-binding protein 3 (FUBP3).